Reading from the N-terminus, the 203-residue chain is MQNTLQQISIYGRLLGAVFYYEPNDARLTDILTFFRQPNWMQEWEISFDVKTHKKITALIEKGLQQNITEQYQYLFIGPNELPTPPWGSVYLDPECVIFGNSLLALRDFLQQHQIAFQTQQDEPEDHIGLMLMLAAYLAENRPHLLTKFLREHFLTWAYHFLEQLSKIENSDFYQALALLTIKTLQQWQVDLHINVPTVRFYR.

It belongs to the TorD/DmsD family. DmsD subfamily.

Required for biogenesis/assembly of DMSO reductase, but not for the interaction of the DmsA signal peptide with the Tat system. May be part of a chaperone cascade complex that facilitates a folding-maturation pathway for the substrate protein. The protein is Probable Tat proofreading chaperone DmsD of Haemophilus influenzae (strain ATCC 51907 / DSM 11121 / KW20 / Rd).